A 423-amino-acid chain; its full sequence is Histidine--tRNA ligase (423 aa).

Belongs to the class-II aminoacyl-tRNA synthetase family. In terms of assembly, homodimer.

Its subcellular location is the cytoplasm. The catalysed reaction is tRNA(His) + L-histidine + ATP = L-histidyl-tRNA(His) + AMP + diphosphate + H(+). The sequence is that of Histidine--tRNA ligase (hisS) from Pasteurella multocida (strain Pm70).